A 398-amino-acid chain; its full sequence is Argininosuccinate synthase (398 aa).

8–16 contacts ATP; sequence AYSGGLDTS. Residue tyrosine 87 participates in L-citrulline binding. Glycine 117 serves as a coordination point for ATP. L-aspartate is bound by residues threonine 119, asparagine 123, and aspartate 124. Asparagine 123 is a binding site for L-citrulline. 4 residues coordinate L-citrulline: arginine 127, serine 175, glutamate 260, and tyrosine 272.

It belongs to the argininosuccinate synthase family. Type 1 subfamily. As to quaternary structure, homotetramer.

It is found in the cytoplasm. The enzyme catalyses L-citrulline + L-aspartate + ATP = 2-(N(omega)-L-arginino)succinate + AMP + diphosphate + H(+). Its pathway is amino-acid biosynthesis; L-arginine biosynthesis; L-arginine from L-ornithine and carbamoyl phosphate: step 2/3. In Mycobacterium marinum (strain ATCC BAA-535 / M), this protein is Argininosuccinate synthase.